We begin with the raw amino-acid sequence, 222 residues long: Superoxide dismutase [Mn], mitochondrial (222 aa).

The transit peptide at 1–24 (MLCRAACSTGRRLGPVAGAAGSRH) directs the protein to the mitochondrion. H50 is a Mn(2+) binding site. Position 58 is a 3'-nitrotyrosine (Y58). Residues K68 and K75 each carry the N6-acetyllysine; alternate modification. An N6-succinyllysine; alternate mark is found at K68 and K75. Residue H98 coordinates Mn(2+). K114 bears the N6-acetyllysine mark. 2 positions are modified to N6-acetyllysine; alternate: K122 and K130. N6-succinyllysine; alternate is present on residues K122 and K130. D183 and H187 together coordinate Mn(2+). An N6-acetyllysine modification is found at K202.

The protein belongs to the iron/manganese superoxide dismutase family. As to quaternary structure, homotetramer. Requires Mn(2+) as cofactor. Nitrated under oxidative stress. Nitration coupled with oxidation inhibits the catalytic activity. In terms of processing, acetylation at Lys-122 decreases enzymatic activity. Deacetylated by SIRT3 upon exposure to ionizing radiations or after long fasting. Post-translationally, polyubiquitinated; leading to proteasomal degradation. Deubiquitinated by USP36 which increases protein stability.

The protein resides in the mitochondrion matrix. The catalysed reaction is 2 superoxide + 2 H(+) = H2O2 + O2. Functionally, destroys superoxide anion radicals which are normally produced within the cells and which are toxic to biological systems. This is Superoxide dismutase [Mn], mitochondrial (Sod2) from Mus musculus (Mouse).